Consider the following 315-residue polypeptide: Glycine--tRNA ligase alpha subunit (315 aa).

It belongs to the class-II aminoacyl-tRNA synthetase family. Tetramer of two alpha and two beta subunits.

The protein localises to the cytoplasm. The catalysed reaction is tRNA(Gly) + glycine + ATP = glycyl-tRNA(Gly) + AMP + diphosphate. The sequence is that of Glycine--tRNA ligase alpha subunit from Pseudomonas aeruginosa (strain LESB58).